Here is a 130-residue protein sequence, read N- to C-terminus: Small ribosomal subunit protein uS8 (130 aa).

This sequence belongs to the universal ribosomal protein uS8 family. In terms of assembly, part of the 30S ribosomal subunit. Contacts proteins S5 and S12.

Its function is as follows. One of the primary rRNA binding proteins, it binds directly to 16S rRNA central domain where it helps coordinate assembly of the platform of the 30S subunit. This Pseudomonas entomophila (strain L48) protein is Small ribosomal subunit protein uS8.